The sequence spans 530 residues: Growth-regulating factor 1 (530 aa).

Residues 1–41 (MDLGVRVSGHETVSSPGQTELGSGFSNKQERSGFDGEDCWR) form a disordered region. A compositionally biased stretch (polar residues) spans 11–27 (ETVSSPGQTELGSGFSN). The span at 28 to 41 (KQERSGFDGEDCWR) shows a compositional bias: basic and acidic residues. Residues 133–168 (PFSLTQWAELEQQALIYKYITANVPVPSSLLLSLKK) form the QLQ domain. Positions 196–240 (DPEPGRCRRTDGKKWRCSRDAVPDQKYCERHINRGRHRSRKPVEG) constitute a WRC domain. 2 short sequence motifs (bipartite nuclear localization signal) span residues 201-211 (RCRRTDGKKWR) and 229-236 (RGRHRSRK). Disordered stretches follow at residues 223–250 (CERHINRGRHRSRKPVEGQNGHNTNAAA) and 485–530 (STFG…APSL). Residues 485–508 (STFGSLSNSSSASSTIIGDNNNKN) show a composition bias toward low complexity. Residues 519 to 530 (TLMNTSATAPSL) are compositionally biased toward polar residues.

This sequence belongs to the GRF family. In terms of assembly, interacts with GIF1 and GIF2. As to expression, strongly expressed in actively growing and developing tissues, such as roots, upper stems, and shoot tips containing the shoot apical meristem (SAM) and flower buds. Also expressed in mature flowers, but weakly expressed in mature stems and leaves.

The protein localises to the nucleus. Transcription activator that plays a role in the regulation of cell expansion in leaf and cotyledons tissues. Component of a network formed by miR396, the GRFs and their interacting factors (GIFs) acting in the regulation of meristem function, at least partially through the control of cell proliferation. microRNA396-GRF1/GRF3 regulatory module acts as a developmental regulator in the reprogramming of root cells during cyst nematode infection, leading to the formation of the syncytium. In Arabidopsis thaliana (Mouse-ear cress), this protein is Growth-regulating factor 1 (GRF1).